The following is a 161-amino-acid chain: Bacterioferritin (161 aa).

One can recognise a Ferritin-like diiron domain in the interval 1 to 145; the sequence is MKGDAKVIEF…TQISLYDRLG (145 aa). Residues glutamate 18 and glutamate 51 each contribute to the Fe cation site. Methionine 52 lines the heme b pocket. 4 residues coordinate Fe cation: histidine 54, glutamate 94, glutamate 127, and histidine 130.

It belongs to the bacterioferritin family. Homooligomer of 24 subunits, arranged as 12 dimers, that are packed together to form an approximately spherical molecule with a central cavity, in which large amounts of iron can be deposited. Heme b is required as a cofactor.

The enzyme catalyses 4 Fe(2+) + O2 + 4 H(+) = 4 Fe(3+) + 2 H2O. It catalyses the reaction Fe(2+)(in) = Fe(2+)(out). Iron-storage protein, whose ferroxidase center binds Fe(2+), oxidizes it using dioxygen to Fe(3+), and participates in the subsequent Fe(3+) oxide mineral core formation within the central cavity of the BFR protein shell. In Rhodobacter capsulatus (Rhodopseudomonas capsulata), this protein is Bacterioferritin (bfr).